The sequence spans 483 residues: Cobyric acid synthase (483 aa).

The GATase cobBQ-type domain maps to 251–438 (SLVVAVPMLP…LHGVFNADEF (188 aa)). Cys333 acts as the Nucleophile in catalysis. His430 is an active-site residue.

It belongs to the CobB/CobQ family. CobQ subfamily.

The protein operates within cofactor biosynthesis; adenosylcobalamin biosynthesis. In terms of biological role, catalyzes amidations at positions B, D, E, and G on adenosylcobyrinic A,C-diamide. NH(2) groups are provided by glutamine, and one molecule of ATP is hydrogenolyzed for each amidation. The polypeptide is Cobyric acid synthase (Brucella anthropi (strain ATCC 49188 / DSM 6882 / CCUG 24695 / JCM 21032 / LMG 3331 / NBRC 15819 / NCTC 12168 / Alc 37) (Ochrobactrum anthropi)).